Reading from the N-terminus, the 414-residue chain is Serine hydroxymethyltransferase (414 aa).

(6S)-5,6,7,8-tetrahydrofolate contacts are provided by residues L117 and 121–123; that span reads GHL. The residue at position 226 (K226) is an N6-(pyridoxal phosphate)lysine.

This sequence belongs to the SHMT family. As to quaternary structure, homodimer. The cofactor is pyridoxal 5'-phosphate.

It is found in the cytoplasm. It catalyses the reaction (6R)-5,10-methylene-5,6,7,8-tetrahydrofolate + glycine + H2O = (6S)-5,6,7,8-tetrahydrofolate + L-serine. The protein operates within one-carbon metabolism; tetrahydrofolate interconversion. Its pathway is amino-acid biosynthesis; glycine biosynthesis; glycine from L-serine: step 1/1. In terms of biological role, catalyzes the reversible interconversion of serine and glycine with tetrahydrofolate (THF) serving as the one-carbon carrier. This reaction serves as the major source of one-carbon groups required for the biosynthesis of purines, thymidylate, methionine, and other important biomolecules. Also exhibits THF-independent aldolase activity toward beta-hydroxyamino acids, producing glycine and aldehydes, via a retro-aldol mechanism. In Dictyoglomus turgidum (strain DSM 6724 / Z-1310), this protein is Serine hydroxymethyltransferase.